An 85-amino-acid polypeptide reads, in one-letter code: N.vectensis toxin 1 6 (85 aa).

A signal peptide spans 1–20; that stretch reads MASFKIVIVCLALLVAVACA. A propeptide spanning residues 21–36 is cleaved from the precursor; sequence RRRDMMSDDELDYHYS. 3 disulfide bridges follow: C42-C82, C44-C72, and C65-C83.

The protein belongs to the sea anemone sodium channel inhibitory toxin family. Type II subfamily. In terms of tissue distribution, expressed in ectodermal glands and in clumps outside of the extodermal layer. Is not expressed in nematocytes. In adult female tissues, shows similar expression levels in mesenteries (gametes-producing tissue), tentacles, pharynx and physa.

The protein resides in the secreted. Its function is as follows. Binds to site 3 of voltage-gated sodium channels and inhibits the inactivation process. Is highly active on DmNav1/TipE (drosophila) and is only extremely weakly active on rat Nav1.4-beta-1/SCN4A-SCN1B, and on human Nav1.5-beta-1/SCN5A-beta-1. This reveals high specificity for arthropod over mammalian channels. In vivo, when released into the medium, this recombinant toxin induces impaired swimming, paralysis and death of the crustacean A.nauplii within several hours. Also causes paralysis of cherry shrimps immediately after injection at very low doses. Its effect on zebrafish (D.rerio) larvae is also rapid, since it induces tail twitching accompanied by impaired swimming after 20 minutes and complete paralysis within 45 minutes. It has also been observed to cause death of zebrafish larvae within 1 hour. The chain is N.vectensis toxin 1 6 from Nematostella vectensis (Starlet sea anemone).